The sequence spans 75 residues: MGSMSIWHWIVVLAVVLLLFGRGKISDLMGDVAKGIKSFKKGMAEDDDAPAKPAEPPRAVPHQATPAPESEKKAV.

The chain crosses the membrane as a helical span at residues 1 to 21; the sequence is MGSMSIWHWIVVLAVVLLLFG. The interval 43 to 75 is disordered; it reads MAEDDDAPAKPAEPPRAVPHQATPAPESEKKAV.

It belongs to the TatA/E family. As to quaternary structure, the Tat system comprises two distinct complexes: a TatABC complex, containing multiple copies of TatA, TatB and TatC subunits, and a separate TatA complex, containing only TatA subunits. Substrates initially bind to the TatABC complex, which probably triggers association of the separate TatA complex to form the active translocon.

The protein localises to the cell inner membrane. Its function is as follows. Part of the twin-arginine translocation (Tat) system that transports large folded proteins containing a characteristic twin-arginine motif in their signal peptide across membranes. TatA could form the protein-conducting channel of the Tat system. The polypeptide is Sec-independent protein translocase protein TatA (Azorhizobium caulinodans (strain ATCC 43989 / DSM 5975 / JCM 20966 / LMG 6465 / NBRC 14845 / NCIMB 13405 / ORS 571)).